Here is a 668-residue protein sequence, read N- to C-terminus: Fructose-1,6-bisphosphatase class 3 (668 aa).

It belongs to the FBPase class 3 family. It depends on Mn(2+) as a cofactor.

The catalysed reaction is beta-D-fructose 1,6-bisphosphate + H2O = beta-D-fructose 6-phosphate + phosphate. It functions in the pathway carbohydrate biosynthesis; gluconeogenesis. In Clostridium botulinum (strain Langeland / NCTC 10281 / Type F), this protein is Fructose-1,6-bisphosphatase class 3.